Consider the following 299-residue polypeptide: Putative cuticle collagen 155 (299 aa).

A signal peptide spans 1–27 (MEFEQRIKAYRFVAYSAVAFSVVAVLS). 4 triple-helical region regions span residues 103–132 (GAAG…PGHP), 151–177 (GPPG…PGQD), 181–202 (GAPG…GAPG), and 216–278 (GAPG…VGEK). Residues 107–278 (PAGTPGKPGR…SGTPGGVGEK (172 aa)) form a disordered region. Positions 129-161 (PGHPPQQPCDPITPPPCQPCPQGPPGPPGPPGP) are enriched in pro residues. The segment covering 163–172 (GDAGGNGNPG) has biased composition (gly residues). The span at 173–197 (SPGQDGQPGAPGNKGPSGPNGNPGA) shows a compositional bias: low complexity. The segment covering 215-233 (PGAPGPQGTPGPQGPPGQP) has biased composition (pro residues). The span at 250-268 (PNGNPGQPGADGNPGAPGQ) shows a compositional bias: low complexity.

The protein belongs to the cuticular collagen family. As to quaternary structure, collagen polypeptide chains are complexed within the cuticle by disulfide bonds and other types of covalent cross-links.

Functionally, nematode cuticles are composed largely of collagen-like proteins. The cuticle functions both as an exoskeleton and as a barrier to protect the worm from its environment. The sequence is that of Putative cuticle collagen 155 (col-155) from Caenorhabditis elegans.